The sequence spans 255 residues: tRNA (guanine-N(1)-)-methyltransferase (255 aa).

Residues Gly-113 and 133 to 138 (IGDYVL) each bind S-adenosyl-L-methionine.

The protein belongs to the RNA methyltransferase TrmD family. In terms of assembly, homodimer.

It localises to the cytoplasm. The catalysed reaction is guanosine(37) in tRNA + S-adenosyl-L-methionine = N(1)-methylguanosine(37) in tRNA + S-adenosyl-L-homocysteine + H(+). Functionally, specifically methylates guanosine-37 in various tRNAs. The sequence is that of tRNA (guanine-N(1)-)-methyltransferase from Salmonella paratyphi A (strain ATCC 9150 / SARB42).